Reading from the N-terminus, the 509-residue chain is Glycerol kinase (509 aa).

T17 provides a ligand contact to ADP. ATP contacts are provided by T17, T18, and S19. Residue T17 participates in sn-glycerol 3-phosphate binding. An ADP-binding site is contributed by R21. Positions 87, 88, 139, and 256 each coordinate sn-glycerol 3-phosphate. Glycerol contacts are provided by R87, E88, Y139, D256, and Q257. Residues T278 and G322 each coordinate ADP. ATP-binding residues include T278, G322, Q326, and A423. ADP contacts are provided by A423 and N427.

This sequence belongs to the FGGY kinase family.

It catalyses the reaction glycerol + ATP = sn-glycerol 3-phosphate + ADP + H(+). It functions in the pathway polyol metabolism; glycerol degradation via glycerol kinase pathway; sn-glycerol 3-phosphate from glycerol: step 1/1. Inhibited by fructose 1,6-bisphosphate (FBP). In terms of biological role, key enzyme in the regulation of glycerol uptake and metabolism. Catalyzes the phosphorylation of glycerol to yield sn-glycerol 3-phosphate. In Corynebacterium glutamicum (strain R), this protein is Glycerol kinase.